We begin with the raw amino-acid sequence, 355 residues long: Isopentenyl-diphosphate delta-isomerase (355 aa).

9–10 (RK) contacts substrate. FMN is bound by residues 67-69 (AIT), S97, and N125. 97–99 (SQR) is a substrate binding site. Q161 lines the substrate pocket. E162 is a binding site for Mg(2+). FMN is bound by residues K197, T227, 276–278 (GIR), and 297–298 (AL).

Belongs to the IPP isomerase type 2 family. As to quaternary structure, homooctamer. Dimer of tetramers. The cofactor is FMN. NADPH serves as cofactor. Requires Mg(2+) as cofactor.

The protein resides in the cytoplasm. The enzyme catalyses isopentenyl diphosphate = dimethylallyl diphosphate. Involved in the biosynthesis of isoprenoids. Catalyzes the 1,3-allylic rearrangement of the homoallylic substrate isopentenyl (IPP) to its allylic isomer, dimethylallyl diphosphate (DMAPP). The protein is Isopentenyl-diphosphate delta-isomerase of Methanococcus maripaludis (strain DSM 14266 / JCM 13030 / NBRC 101832 / S2 / LL).